Here is a 599-residue protein sequence, read N- to C-terminus: Sulfite reductase [NADPH] flavoprotein alpha-component (599 aa).

Residues 64-202 enclose the Flavodoxin-like domain; that stretch reads VTLISASQTG…AASEWRACVV (139 aa). Residues 70 to 75, 117 to 120, and 153 to 162 contribute to the FMN site; these read SQTGNA, STQG, and LGDTSYEFFC. One can recognise an FAD-binding FR-type domain in the interval 234–448; the sequence is DAPLTATLSV…IEHNDNFRLP (215 aa). Residues threonine 322, alanine 356, 386–389, 404–406, tyrosine 410, and 419–422 contribute to the FAD site; these read RLYS, TVG, and GGAS. Residues 519 to 520, 525 to 529, and aspartate 561 contribute to the NADP(+) site; these read SR and KIYVQ. Residue tyrosine 599 coordinates FAD.

It belongs to the NADPH-dependent sulphite reductase flavoprotein subunit CysJ family. This sequence in the N-terminal section; belongs to the flavodoxin family. In the C-terminal section; belongs to the flavoprotein pyridine nucleotide cytochrome reductase family. In terms of assembly, alpha(8)-beta(8). The alpha component is a flavoprotein, the beta component is a hemoprotein. It depends on FAD as a cofactor. FMN serves as cofactor.

The catalysed reaction is hydrogen sulfide + 3 NADP(+) + 3 H2O = sulfite + 3 NADPH + 4 H(+). It functions in the pathway sulfur metabolism; hydrogen sulfide biosynthesis; hydrogen sulfide from sulfite (NADPH route): step 1/1. Its function is as follows. Component of the sulfite reductase complex that catalyzes the 6-electron reduction of sulfite to sulfide. This is one of several activities required for the biosynthesis of L-cysteine from sulfate. The flavoprotein component catalyzes the electron flow from NADPH -&gt; FAD -&gt; FMN to the hemoprotein component. The sequence is that of Sulfite reductase [NADPH] flavoprotein alpha-component from Salmonella typhi.